Here is a 285-residue protein sequence, read N- to C-terminus: Putative sugar uptake protein lmo0424 (285 aa).

Helical transmembrane passes span 2–21, 31–50, 55–77, 111–133, 146–168, 172–194, 207–229, 233–255, and 262–284; these read SIYL…PIIA, QLLG…FWIL, TVLS…LLQF, WQTV…GVVM, SVSF…YVVT, FDVT…AIGI, VTFN…LATA, VATS…ILIF, and LEWT…LSLL.

This sequence belongs to the GRP transporter (TC 2.A.7.5) family.

The protein resides in the cell membrane. This is Putative sugar uptake protein lmo0424 from Listeria monocytogenes serovar 1/2a (strain ATCC BAA-679 / EGD-e).